Consider the following 164-residue polypeptide: 5-formyltetrahydrofolate cyclo-ligase (164 aa).

3 to 7 (KNALR) is a binding site for ATP. Substrate is bound by residues E50 and E55. 115–123 (RLGFGKGYY) provides a ligand contact to ATP. D124 lines the Mg(2+) pocket. ATP contacts are provided by R125 and W153. D154 is a Mg(2+) binding site.

The protein belongs to the 5-formyltetrahydrofolate cyclo-ligase family. In terms of assembly, monomer or homodimer. Requires Mg(2+) as cofactor. Mn(2+) is required as a cofactor. Ca(2+) serves as cofactor. The cofactor is Zn(2+). It depends on Fe(2+) as a cofactor. Requires Co(2+) as cofactor. Cu(2+) is required as a cofactor.

Its subcellular location is the cytoplasm. The catalysed reaction is (6S)-5-formyl-5,6,7,8-tetrahydrofolate + ATP = (6R)-5,10-methenyltetrahydrofolate + ADP + phosphate. In terms of biological role, involved in folate metabolism. Catalyzes the irreversible conversion of 5-formyltetrahydrofolate (5-FTHF) to yield 5,10-methenyltetrahydrofolate. The protein is 5-formyltetrahydrofolate cyclo-ligase of Mycoplasma pneumoniae (strain ATCC 29342 / M129 / Subtype 1) (Mycoplasmoides pneumoniae).